Here is a 378-residue protein sequence, read N- to C-terminus: MNEMTHRTKTRPVKVGNLTIGGNNELIIQSMTTTKTHDVEATVAEIKRLEEAGCQVVRVAVPDERAANAIADIKKQINIPLVADIHFDYRLALKAIEGGIDKVRINPGNIGRRHKVEAVVNAAKERGIPIRIGVNAGSLERHILEKYGYPTADGMVESALHHIKILEDLDFHDIIVSMKASDVNLAIEAYEKAARAFDYPLHLGITESGTLFAGTVKSAAGLGAILNKGIGNTLRISLSADPVEEVKVARELLKSFGLASNAATLISCPTCGRIEIDLISIANEVEEYISTLQVPIKVAVLGCAVNGPGEAREADIGIAGARGEGLLFRKGQVVRKVPEEIMVEELKKEIDVIAAEMAAEREKEKEKEKEKEKETQEQ.

[4Fe-4S] cluster is bound by residues Cys-268, Cys-271, Cys-303, and Glu-310. A disordered region spans residues 359–378 (AEREKEKEKEKEKEKETQEQ).

Belongs to the IspG family. It depends on [4Fe-4S] cluster as a cofactor.

The enzyme catalyses (2E)-4-hydroxy-3-methylbut-2-enyl diphosphate + oxidized [flavodoxin] + H2O + 2 H(+) = 2-C-methyl-D-erythritol 2,4-cyclic diphosphate + reduced [flavodoxin]. It participates in isoprenoid biosynthesis; isopentenyl diphosphate biosynthesis via DXP pathway; isopentenyl diphosphate from 1-deoxy-D-xylulose 5-phosphate: step 5/6. Functionally, converts 2C-methyl-D-erythritol 2,4-cyclodiphosphate (ME-2,4cPP) into 1-hydroxy-2-methyl-2-(E)-butenyl 4-diphosphate. In Bacillus cereus (strain ZK / E33L), this protein is 4-hydroxy-3-methylbut-2-en-1-yl diphosphate synthase (flavodoxin).